We begin with the raw amino-acid sequence, 328 residues long: Cytochrome c biogenesis protein CcsA (328 aa).

The next 8 membrane-spanning stretches (helical) occupy residues Phe15–Pro35, Leu37–Gly57, Ile68–Ile88, Leu97–Leu117, Val142–Phe162, Ile236–Asn256, Trp271–Trp291, and Ala297–Leu317.

This sequence belongs to the CcmF/CycK/Ccl1/NrfE/CcsA family. In terms of assembly, may interact with ccs1.

It localises to the cellular thylakoid membrane. Required during biogenesis of c-type cytochromes (cytochrome c6 and cytochrome f) at the step of heme attachment. In Gloeothece citriformis (strain PCC 7424) (Cyanothece sp. (strain PCC 7424)), this protein is Cytochrome c biogenesis protein CcsA.